The chain runs to 421 residues: MDNRSPRSRGNMGPKPTPLKVRGDSHKIIKKPPLAPPHPQPQPPQTHQQEPSQSRPPPGPVNIYTVTPRIIHTHPNNFMTLVQRLTGQTSTSTTSSSSSSSTSEPKDTSTMVDTSHGLISPAARFAVTEKANISNELGTFVGGEGTMDQYYHHHHQEQPHQNRGFERPSFHHAGILSPGPYSLPSVSPDFFSTIGPTDPQEGTPYLIPSGDMHSYLSQDEDRGIPHSVKDTRSIGSAYDRYLQSMQTFFVPSEEAGPFNGVGMVRQGGSNMMPGPSMGELMAGCGGSLPSDFRPNGRDMGFGQLDSVGRPGREPHPLPPDVSNTLYVEGLPSNCSRREVSHIFRPFVGYREVRLVTQDSKHRSGDPTVLCFVDFENSACAATALSALQDYRMDEDEPDSKILRLQFFRNPGPRPGQRGGRR.

Disordered regions lie at residues 1–64 (MDNR…VNIY), 86–114 (TGQT…MVDT), and 197–226 (TDPQ…GIPH). The span at 33–44 (PLAPPHPQPQPP) shows a compositional bias: pro residues. A compositionally biased stretch (low complexity) spans 89–103 (TSTSTTSSSSSSSTS). Residues 323–409 (NTLYVEGLPS…KILRLQFFRN (87 aa)) enclose the RRM domain.

Isoform 1: Expressed in root meristems, lateral root primordia, root vascular tissues and cotyledon vascular tissues. Isoform 2: Expressed in root meristems, lateral root primordia and root vascular tissues.

The protein resides in the nucleus speckle. In terms of biological role, alternative splicing (AS) regulator that binds to specific mRNAs and modulates auxin effects on the transcriptome. Displaced from its targets upon binding to AS competitor long non-coding RNA (ASCO-RNA). This Arabidopsis thaliana (Mouse-ear cress) protein is Nuclear speckle RNA-binding protein B.